A 349-amino-acid chain; its full sequence is Hydroxymethylglutaryl-CoA synthase (349 aa).

(3S)-3-hydroxy-3-methylglutaryl-CoA-binding residues include D29 and A30. E81 serves as the catalytic Proton donor/acceptor. The (3S)-3-hydroxy-3-methylglutaryl-CoA site is built by C113, T154, T202, and H235. C113 acts as the Acyl-thioester intermediate in catalysis. The Proton donor/acceptor role is filled by H235. A CoA-binding site is contributed by R240. R244, N267, and S297 together coordinate (3S)-3-hydroxy-3-methylglutaryl-CoA.

This sequence belongs to the thiolase-like superfamily. Archaeal HMG-CoA synthase family. As to quaternary structure, interacts with acetoacetyl-CoA thiolase that catalyzes the precedent step in the pathway and with a DUF35 protein. The acetoacetyl-CoA thiolase/HMG-CoA synthase complex channels the intermediate via a fused CoA-binding site, which allows for efficient coupling of the endergonic thiolase reaction with the exergonic HMGCS reaction.

It catalyses the reaction acetoacetyl-CoA + acetyl-CoA + H2O = (3S)-3-hydroxy-3-methylglutaryl-CoA + CoA + H(+). It participates in metabolic intermediate biosynthesis; (R)-mevalonate biosynthesis; (R)-mevalonate from acetyl-CoA: step 2/3. Its function is as follows. Catalyzes the condensation of acetyl-CoA with acetoacetyl-CoA to form 3-hydroxy-3-methylglutaryl-CoA (HMG-CoA). Functions in the mevalonate (MVA) pathway leading to isopentenyl diphosphate (IPP), a key precursor for the biosynthesis of isoprenoid compounds that are building blocks of archaeal membrane lipids. The polypeptide is Hydroxymethylglutaryl-CoA synthase (Caldivirga maquilingensis (strain ATCC 700844 / DSM 13496 / JCM 10307 / IC-167)).